The following is a 469-amino-acid chain: Swarming motility regulation sensor protein RssA (469 aa).

The next 2 helical transmembrane spans lie at 12–32 and 167–187; these read IIFQ…WVKY and VPLL…AYFS. Residues 245–459 form the Histidine kinase domain; it reads DAAHELRTPI…GFIIDLPESY (215 aa). Position 248 is a phosphohistidine; by autocatalysis (H248).

It is found in the cell inner membrane. The enzyme catalyses ATP + protein L-histidine = ADP + protein N-phospho-L-histidine.. In terms of biological role, member of the two-component regulatory system RssA/RssB involved in regulation of swarming motility which has been shown to be inhibited by saturated fatty acids. RssA/RssB regulates cellular fatty acid composition, hemolysin production and cell surface topography. RssA/RssB negatively regulates the activity of SlhBA. It can also act as a negative regulator for the control of the swarming initiation. The sequence is that of Swarming motility regulation sensor protein RssA (rssA) from Serratia marcescens.